A 78-amino-acid polypeptide reads, in one-letter code: Sec-independent protein translocase protein TatA (78 aa).

The chain crosses the membrane as a helical span at residues 1-21 (MGGISIWQLLIIAVIVVLLFG). A compositionally biased stretch (basic and acidic residues) spans 47–59 (ESEKKDADFEPKS). The tract at residues 47-78 (ESEKKDADFEPKSLEQQNKQAATESKKDKEQA) is disordered. Positions 60-69 (LEQQNKQAAT) are enriched in polar residues.

This sequence belongs to the TatA/E family. The Tat system comprises two distinct complexes: a TatABC complex, containing multiple copies of TatA, TatB and TatC subunits, and a separate TatA complex, containing only TatA subunits. Substrates initially bind to the TatABC complex, which probably triggers association of the separate TatA complex to form the active translocon.

It localises to the cell inner membrane. Its function is as follows. Part of the twin-arginine translocation (Tat) system that transports large folded proteins containing a characteristic twin-arginine motif in their signal peptide across membranes. TatA could form the protein-conducting channel of the Tat system. The sequence is that of Sec-independent protein translocase protein TatA from Vibrio vulnificus (strain YJ016).